We begin with the raw amino-acid sequence, 476 residues long: Inosine-5'-monophosphate dehydrogenase (476 aa).

CBS domains are found at residues 93–151 (IIRD…VKDI) and 152–211 (MTKD…TRDE). NAD(+)-binding positions include D242 and 292-294 (GIG). Residues G294 and G296 each contribute to the K(+) site. S297 is a binding site for IMP. C299 is a K(+) binding site. C299 serves as the catalytic Thioimidate intermediate. Residues 334–336 (DGG), 357–358 (GY), and 381–385 (YRGMG) each bind IMP. The Proton acceptor role is filled by R398. An IMP-binding site is contributed by E408. E462 provides a ligand contact to K(+).

It belongs to the IMPDH/GMPR family. In terms of assembly, homotetramer. Requires K(+) as cofactor.

The enzyme catalyses IMP + NAD(+) + H2O = XMP + NADH + H(+). It participates in purine metabolism; XMP biosynthesis via de novo pathway; XMP from IMP: step 1/1. With respect to regulation, mycophenolic acid (MPA) is a non-competitive inhibitor that prevents formation of the closed enzyme conformation by binding to the same site as the amobile flap. In contrast, mizoribine monophosphate (MZP) is a competitive inhibitor that induces the closed conformation. MPA is a potent inhibitor of mammalian IMPDHs but a poor inhibitor of the bacterial enzymes. MZP is a more potent inhibitor of bacterial IMPDH. Catalyzes the conversion of inosine 5'-phosphate (IMP) to xanthosine 5'-phosphate (XMP), the first committed and rate-limiting step in the de novo synthesis of guanine nucleotides, and therefore plays an important role in the regulation of cell growth. The protein is Inosine-5'-monophosphate dehydrogenase of Korarchaeum cryptofilum (strain OPF8).